A 376-amino-acid chain; its full sequence is Anhydro-N-acetylmuramic acid kinase (376 aa).

An ATP-binding site is contributed by 11–18 (GTSMDGVD).

The protein belongs to the anhydro-N-acetylmuramic acid kinase family.

It catalyses the reaction 1,6-anhydro-N-acetyl-beta-muramate + ATP + H2O = N-acetyl-D-muramate 6-phosphate + ADP + H(+). The protein operates within amino-sugar metabolism; 1,6-anhydro-N-acetylmuramate degradation. Its pathway is cell wall biogenesis; peptidoglycan recycling. Functionally, catalyzes the specific phosphorylation of 1,6-anhydro-N-acetylmuramic acid (anhMurNAc) with the simultaneous cleavage of the 1,6-anhydro ring, generating MurNAc-6-P. Is required for the utilization of anhMurNAc either imported from the medium or derived from its own cell wall murein, and thus plays a role in cell wall recycling. The sequence is that of Anhydro-N-acetylmuramic acid kinase from Acinetobacter baylyi (strain ATCC 33305 / BD413 / ADP1).